Reading from the N-terminus, the 494-residue chain is MKKQAFSSEQYLNLQRDHILERINQFDGKLYLEFGGKMLEDFHAARVLPGYEPDNKIKLLQELKEQVEVVIAINASNIEHSKARGDLGISYDQEVLRLIDKFNELGIFVGSVVITQYAGQPAADAFRNQLEKNGIDSYLHYPIKGYPTDMDHIISPEGMGKNDYIKTSRNLIVVTAPGPGSGKLATCMSNMYHDQINGIKSGYAKFETFPIWNLPLHHPVNLAYEAATADLDDVNMIDPFHLQTYGETTVNYNRDIEIFPVLKRMLERILGKSPYASPTDMGVNMVGFAITDDEAAVEASKQEIIRRYYQTVLDFKAEKVGEAAVKKIELLMNDLGITPADRKVAVVARQKAEETGGPALAFELPNGEIVTGKNSELFGPTAAALINAIKKSADIAKEVKLIEPEVVKPIQGLKIDHLGSRNPRLHSNEILIALAITATENPDAARAMEELGNLKGSEAHSTIILTDEDKNVLRKLGINVTFDPYYQYDRLYRK.

Belongs to the UPF0371 family.

The chain is UPF0371 protein spr0309 from Streptococcus pneumoniae (strain ATCC BAA-255 / R6).